Reading from the N-terminus, the 316-residue chain is Small ribosomal subunit protein mS26 (316 aa).

A disordered region spans residues 41–71; the sequence is TTRSARDSVSIPPDSPNYIKVPEPPQSSEVR.

It belongs to the mitochondrion-specific ribosomal protein mS26 family. Component of the mitochondrial small ribosomal subunit (mt-SSU). Mature N.crassa 74S mitochondrial ribosomes consist of a small (37S) and a large (54S) subunit. The 37S small subunit contains a 16S ribosomal RNA (16S mt-rRNA) and 32 different proteins. The 54S large subunit contains a 23S rRNA (23S mt-rRNA) and 42 different proteins.

It is found in the mitochondrion. Functionally, component of the mitochondrial ribosome (mitoribosome), a dedicated translation machinery responsible for the synthesis of mitochondrial genome-encoded proteins, including at least some of the essential transmembrane subunits of the mitochondrial respiratory chain. The mitoribosomes are attached to the mitochondrial inner membrane and translation products are cotranslationally integrated into the membrane. This Neurospora crassa (strain ATCC 24698 / 74-OR23-1A / CBS 708.71 / DSM 1257 / FGSC 987) protein is Small ribosomal subunit protein mS26 (pet123).